The following is a 467-amino-acid chain: Glutamate--tRNA ligase (467 aa).

Residues 9 to 19 (PSPTGFLHIGG) carry the 'HIGH' region motif. The 'KMSKS' region signature appears at 241–245 (KLSKR). Lys244 contacts ATP.

The protein belongs to the class-I aminoacyl-tRNA synthetase family. Glutamate--tRNA ligase type 1 subfamily. In terms of assembly, monomer.

It localises to the cytoplasm. It catalyses the reaction tRNA(Glu) + L-glutamate + ATP = L-glutamyl-tRNA(Glu) + AMP + diphosphate. Functionally, catalyzes the attachment of glutamate to tRNA(Glu) in a two-step reaction: glutamate is first activated by ATP to form Glu-AMP and then transferred to the acceptor end of tRNA(Glu). The chain is Glutamate--tRNA ligase from Methylobacillus flagellatus (strain ATCC 51484 / DSM 6875 / VKM B-1610 / KT).